Here is a 430-residue protein sequence, read N- to C-terminus: Enolase (430 aa).

Position 167 (Q167) interacts with (2R)-2-phosphoglycerate. E209 serves as the catalytic Proton donor. D246, E287, and D314 together coordinate Mg(2+). (2R)-2-phosphoglycerate is bound by residues K339, R368, S369, and K390. Residue K339 is the Proton acceptor of the active site.

This sequence belongs to the enolase family. Mg(2+) serves as cofactor.

The protein localises to the cytoplasm. It localises to the secreted. Its subcellular location is the cell surface. The enzyme catalyses (2R)-2-phosphoglycerate = phosphoenolpyruvate + H2O. The protein operates within carbohydrate degradation; glycolysis; pyruvate from D-glyceraldehyde 3-phosphate: step 4/5. In terms of biological role, catalyzes the reversible conversion of 2-phosphoglycerate (2-PG) into phosphoenolpyruvate (PEP). It is essential for the degradation of carbohydrates via glycolysis. The polypeptide is Enolase (Prochlorococcus marinus (strain MIT 9215)).